The sequence spans 200 residues: MARCKS-related protein (200 aa).

A disordered region spans residues 1–200 (MGSQSSKAPR…PTPASAEQNE (200 aa)). Gly-2 carries N-myristoyl glycine lipidation. Residue Thr-14 is modified to Phosphothreonine. Over residues 16 to 26 (EEAAGASPAKA) the composition is skewed to low complexity. Residues Ser-22, Ser-36, and Ser-48 each carry the phosphoserine modification. Over residues 53-64 (GTDEAAGATGDA) the composition is skewed to low complexity. Ser-71 is modified (phosphoserine). Basic and acidic residues predominate over residues 74–85 (AEAKGEVAPKET). Thr-85 bears the Phosphothreonine mark. The span at 86–98 (PKKKKKFSFKKPF) shows a compositional bias: basic residues. The interval 87–110 (KKKKKFSFKKPFKLSGLSFKRNRK) is effector domain involved in lipid-binding and calmodulin-binding. A phosphoserine; by PKC mark is found at Ser-93, Ser-101, and Ser-104. Ser-119 is modified (phosphoserine). Ser-120 is subject to Phosphoserine; by MAPK8. A phosphoserine mark is found at Ser-132 and Ser-135. A Phosphothreonine; by MAPK8 modification is found at Thr-148. Phosphoserine is present on residues Ser-151, Ser-162, and Ser-165. Positions 156 to 165 (AKGAEASAAS) are enriched in low complexity. Position 170 is a phosphothreonine (Thr-170). Positions 178-200 (AAEPSTPSGPESGPTPASAEQNE) are enriched in low complexity. The residue at position 183 (Thr-183) is a Phosphothreonine; by MAPK8. Residue Thr-192 is modified to Phosphothreonine.

Belongs to the MARCKS family. In terms of assembly, binds to filamentous actin (F-actin), but not to monomeric G-actin, independently of its phosphorylation status. Interacts with calmodulin. In terms of processing, phosphorylated. Phosphorylation at Ser-120 and Thr-183 is non-redundantly catalyzed by MAPK8 in vivo. Phosphorylation at Thr-148 is preferentially catalyzed by MAPK8 in vivo, but this modification can also be catalyzed by other kinases in the absence of MAPK8. May be phosphorylated by protein kinase C, which disrupts the interaction with calmodulin. In terms of tissue distribution, expressed at high levels in brain cortex and hippocampus, including dentate gyrus, anterior olfactory nucleus, primary olfactory cortex, entorhinal cortex, medial preoptic area and dorsomedial hypothalamic nucleus (at protein level). Expressed in neuronal cells (at protein level). Detected in the retina. Strongly expressed in testis and uterus; expressed at lower levels in cerebellum, cerebrum, adipose tissue, spleen, kidney, thyroid, liver, lung, skeletal muscle and heart. Detected in T-cells and B-cells.

Its subcellular location is the cytoplasm. It is found in the cytoskeleton. The protein resides in the cell membrane. Involved in the control of cell movement by regulating actin cytoskeleton homeostasis and filopodium and lamellipodium formation. When unphosphorylated, induces cell migration. When phosphorylated by MAPK8, induces actin bundles formation and stabilization, thereby reducing actin plasticity, hence restricting cell movement, including neuronal migration. May be involved in coupling the protein kinase C and calmodulin signal transduction systems. The protein is MARCKS-related protein (Marcksl1) of Mus musculus (Mouse).